A 230-amino-acid chain; its full sequence is Sugar fermentation stimulation protein homolog (230 aa).

Belongs to the SfsA family.

The sequence is that of Sugar fermentation stimulation protein homolog from Clostridium botulinum (strain Alaska E43 / Type E3).